A 146-amino-acid polypeptide reads, in one-letter code: Snaclec mamushigin subunit beta (146 aa).

Positions 1–23 (MGRFIFLSFGLLVVFVSLSGTGA) are cleaved as a signal peptide. 3 cysteine pairs are disulfide-bonded: Cys-25–Cys-36, Cys-53–Cys-142, and Cys-119–Cys-134. The 112-residue stretch at 32 to 143 (YEGHCYRVFQ…CSRTYNVVCK (112 aa)) folds into the C-type lectin domain.

Heterodimer of subunits alpha and beta; disulfide-linked. As to expression, expressed by the venom gland.

It is found in the secreted. Binds to platelet GPIbalpha (GP1BA) and enhances platelet aggregation at low-shear stress. At high-shear stress, blocks platelet aggregation in a dose-dependent manner. The polypeptide is Snaclec mamushigin subunit beta (Gloydius blomhoffii (Mamushi)).